Consider the following 480-residue polypeptide: UDP-glycosyltransferase 708D1 (480 aa).

Residue histidine 20 is the Proton acceptor of the active site. Histidine 20 lines the an anthocyanidin pocket. Aspartate 118 (charge relay) is an active-site residue. Threonine 141 is a binding site for UDP-alpha-D-glucose. The UDP stretch occupies residues 291-292 (NR). Valine 354, glutamine 356, histidine 371, tryptophan 374, asparagine 375, serine 376, glutamate 379, aspartate 395, and glutamine 396 together coordinate UDP-alpha-D-glucose.

Belongs to the UDP-glycosyltransferase family.

The catalysed reaction is a 3'-hydro-2'-hydroxy-beta-oxodihydrochalcone + UDP-alpha-D-glucose = a 3'-(beta-D-glucopyranosyl)-2'-hydroxy-beta-oxodihydrochalcone + UDP + H(+). Functionally, UDP-glucose-dependent glucosyltransferase catalyzing the c-glucosylation of the A ring of 2-hydroxynaringenin. Also active toward phloretin, but not toward naringenin and apigenin. This is UDP-glycosyltransferase 708D1 from Glycine max (Soybean).